The chain runs to 312 residues: tRNA uridine(34) hydroxylase (312 aa).

The 95-residue stretch at 123 to 217 (SDPEVLLIDT…YLEEVPQEQS (95 aa)) folds into the Rhodanese domain. The active-site Cysteine persulfide intermediate is Cys177. Residues 282-293 (ARERQKQIELAR) show a composition bias toward basic and acidic residues. Positions 282–312 (ARERQKQIELARQRNQPHPLGRDPRQSTLEN) are disordered.

This sequence belongs to the TrhO family.

It catalyses the reaction uridine(34) in tRNA + AH2 + O2 = 5-hydroxyuridine(34) in tRNA + A + H2O. Functionally, catalyzes oxygen-dependent 5-hydroxyuridine (ho5U) modification at position 34 in tRNAs. The polypeptide is tRNA uridine(34) hydroxylase (Pseudomonas aeruginosa (strain UCBPP-PA14)).